The chain runs to 186 residues: Ribosome-recycling factor (186 aa).

This sequence belongs to the RRF family.

It localises to the cytoplasm. In terms of biological role, responsible for the release of ribosomes from messenger RNA at the termination of protein biosynthesis. May increase the efficiency of translation by recycling ribosomes from one round of translation to another. This chain is Ribosome-recycling factor, found in Methylocella silvestris (strain DSM 15510 / CIP 108128 / LMG 27833 / NCIMB 13906 / BL2).